Consider the following 320-residue polypeptide: Malate dehydrogenase (320 aa).

NAD(+)-binding positions include 10 to 15 and D34; that span reads GAGQIG. The substrate site is built by R83 and R89. NAD(+) contacts are provided by residues N96 and 119 to 121; that span reads ITN. The substrate site is built by N121 and R152. H176 acts as the Proton acceptor in catalysis.

Belongs to the LDH/MDH superfamily. MDH type 3 family.

It carries out the reaction (S)-malate + NAD(+) = oxaloacetate + NADH + H(+). In terms of biological role, catalyzes the reversible oxidation of malate to oxaloacetate. The protein is Malate dehydrogenase of Jannaschia sp. (strain CCS1).